We begin with the raw amino-acid sequence, 512 residues long: Kynurenine 3-monooxygenase (512 aa).

It belongs to the aromatic-ring hydroxylase family. KMO subfamily. It depends on FAD as a cofactor.

It localises to the mitochondrion outer membrane. It catalyses the reaction L-kynurenine + NADPH + O2 + H(+) = 3-hydroxy-L-kynurenine + NADP(+) + H2O. It participates in cofactor biosynthesis; NAD(+) biosynthesis; quinolinate from L-kynurenine: step 1/3. Its function is as follows. Catalyzes the hydroxylation of L-kynurenine (L-Kyn) to form 3-hydroxy-L-kynurenine (L-3OHKyn). Required for synthesis of quinolinic acid. This chain is Kynurenine 3-monooxygenase (bna4), found in Aspergillus clavatus (strain ATCC 1007 / CBS 513.65 / DSM 816 / NCTC 3887 / NRRL 1 / QM 1276 / 107).